We begin with the raw amino-acid sequence, 195 residues long: UPF0301 protein CCNA_03506 (195 aa).

This sequence belongs to the UPF0301 (AlgH) family.

This Caulobacter vibrioides (strain NA1000 / CB15N) (Caulobacter crescentus) protein is UPF0301 protein CCNA_03506.